The sequence spans 82 residues: Small ribosomal subunit protein uS17 (82 aa).

The protein belongs to the universal ribosomal protein uS17 family. In terms of assembly, part of the 30S ribosomal subunit.

One of the primary rRNA binding proteins, it binds specifically to the 5'-end of 16S ribosomal RNA. This chain is Small ribosomal subunit protein uS17, found in Aeromonas salmonicida (strain A449).